A 281-amino-acid chain; its full sequence is MGAIMLDGKATRDEIFGDLKQRVAALDAAGRTPGLGTILVGDDPGSQAYVRGKHADCAKVGITSIRRDLPADISTATLNETIDELNANPDCTGYIVQLPLPKHLDENAALERVDPAKDADGLHPTNLGRLVLGTPAPLPCTPRGIVHLLRRYDISIAGAHVVVIGRGVTVGRPLGLLLTRRSENATVTLCHTGTRDLPALTRQADIVVAAVGVAHLLTADMVRPGAAVIDVGVSRTDDGLVGDVHPDVWELAGHVSPNPGGVGPLTRAFLLTNVVELAERR.

Residues 165-167 (GRG), threonine 192, and valine 233 each bind NADP(+).

It belongs to the tetrahydrofolate dehydrogenase/cyclohydrolase family. As to quaternary structure, homodimer.

It carries out the reaction (6R)-5,10-methylene-5,6,7,8-tetrahydrofolate + NADP(+) = (6R)-5,10-methenyltetrahydrofolate + NADPH. The enzyme catalyses (6R)-5,10-methenyltetrahydrofolate + H2O = (6R)-10-formyltetrahydrofolate + H(+). The protein operates within one-carbon metabolism; tetrahydrofolate interconversion. Catalyzes the oxidation of 5,10-methylenetetrahydrofolate to 5,10-methenyltetrahydrofolate and then the hydrolysis of 5,10-methenyltetrahydrofolate to 10-formyltetrahydrofolate. This chain is Bifunctional protein FolD, found in Mycobacterium tuberculosis (strain ATCC 25177 / H37Ra).